Reading from the N-terminus, the 311-residue chain is Aspartate carbamoyltransferase catalytic subunit (311 aa).

Carbamoyl phosphate contacts are provided by Arg55 and Thr56. Lys85 is an L-aspartate binding site. Residues Arg106, His135, and Gln138 each coordinate carbamoyl phosphate. L-aspartate contacts are provided by Arg168 and Arg230. Carbamoyl phosphate is bound by residues Leu268 and Pro269.

This sequence belongs to the aspartate/ornithine carbamoyltransferase superfamily. ATCase family. Heterododecamer (2C3:3R2) of six catalytic PyrB chains organized as two trimers (C3), and six regulatory PyrI chains organized as three dimers (R2).

It catalyses the reaction carbamoyl phosphate + L-aspartate = N-carbamoyl-L-aspartate + phosphate + H(+). It functions in the pathway pyrimidine metabolism; UMP biosynthesis via de novo pathway; (S)-dihydroorotate from bicarbonate: step 2/3. In terms of biological role, catalyzes the condensation of carbamoyl phosphate and aspartate to form carbamoyl aspartate and inorganic phosphate, the committed step in the de novo pyrimidine nucleotide biosynthesis pathway. This is Aspartate carbamoyltransferase catalytic subunit from Baumannia cicadellinicola subsp. Homalodisca coagulata.